The sequence spans 261 residues: MTQEFIDKVSSYLTPDVDIAPISQGAEAIVFTTTTHPYLPRAKDSHQKYIIKYRPPKRYRHPQIDQALTKHRTLNESRLLAKLYLIPGLCVPQLIACDPYNGFIWLEFLGEDLPGGHGFSNLKNFLWMHDQDPYSDLVATTLRKVGRQIGLLHWNDYCHGDLTSSNIVLVRDGARWTPHLIDFGLGSVSNLVEDKGVDLYVLERAILSTHSKHAEKYNAWIMEGFEEVYREQGAKGAKKLKEVTKRFEEVRLRGRKRSMLG.

The region spanning 16–261 is the Protein kinase domain; the sequence is DVDIAPISQG…LRGRKRSMLG (246 aa). ATP contacts are provided by residues 22-30 and lysine 43; that span reads ISQGAEAIV. Aspartate 161 functions as the Proton acceptor in the catalytic mechanism. Phosphoserine; by autocatalysis occurs at positions 187 and 189.

Belongs to the protein kinase superfamily. BUD32 family. In terms of assembly, component of the EKC/KEOPS complex composed of at least BUD32, CGI121, GON7, KAE1 and PCC1; the whole complex dimerizes.

Its subcellular location is the cytoplasm. It is found in the nucleus. The protein resides in the chromosome. The protein localises to the telomere. The enzyme catalyses L-seryl-[protein] + ATP = O-phospho-L-seryl-[protein] + ADP + H(+). The catalysed reaction is L-threonyl-[protein] + ATP = O-phospho-L-threonyl-[protein] + ADP + H(+). Functionally, component of the EKC/KEOPS complex that is required for the formation of a threonylcarbamoyl group on adenosine at position 37 (t(6)A37) in tRNAs that read codons beginning with adenine. The complex is probably involved in the transfer of the threonylcarbamoyl moiety of threonylcarbamoyl-AMP (TC-AMP) to the N6 group of A37. BUD32 has ATPase activity in the context of the EKC/KEOPS complex and likely plays a supporting role to the catalytic subunit KAE1. The EKC/KEOPS complex also promotes both telomere uncapping and telomere elongation. The complex is required for efficient recruitment of transcriptional coactivators. Important for bud site selection. The polypeptide is EKC/KEOPS complex subunit BUD32 (BUD32) (Saccharomyces cerevisiae (strain ATCC 204508 / S288c) (Baker's yeast)).